Here is a 364-residue protein sequence, read N- to C-terminus: D-alanine--D-alanine ligase A (364 aa).

An ATP-grasp domain is found at 145–348 (KRLLRDAGLN…YTDLITRLIE (204 aa)). 175-230 (ESKLGLPLFVKPANQGSSVGVSKVTSEEQYAIAVDLAFEFDHKVIVEQGIKGREIE) contributes to the ATP binding site. Mg(2+)-binding residues include aspartate 302, glutamate 315, and asparagine 317.

This sequence belongs to the D-alanine--D-alanine ligase family. It depends on Mg(2+) as a cofactor. Requires Mn(2+) as cofactor.

It localises to the cytoplasm. The enzyme catalyses 2 D-alanine + ATP = D-alanyl-D-alanine + ADP + phosphate + H(+). The protein operates within cell wall biogenesis; peptidoglycan biosynthesis. Cell wall formation. This Escherichia coli O157:H7 protein is D-alanine--D-alanine ligase A (ddlA).